The sequence spans 567 residues: Adenine deaminase 2 (567 aa).

Belongs to the metallo-dependent hydrolases superfamily. Adenine deaminase family. Mn(2+) serves as cofactor.

It catalyses the reaction adenine + H2O + H(+) = hypoxanthine + NH4(+). This is Adenine deaminase 2 from Oenococcus oeni (strain ATCC BAA-331 / PSU-1).